Consider the following 225-residue polypeptide: Glutathione S-transferase Mu 3 (225 aa).

The region spanning 5 to 92 (SSMVLGYWDI…YIARKHNMCG (88 aa)) is the GST N-terminal domain. Glutathione contacts are provided by residues 11–12 (YW), 50–54 (WLDVK), and 63–64 (NL). Lysine 54 is covalently cross-linked (Glycyl lysine isopeptide (Lys-Gly) (interchain with G-Cter in SUMO2)). A Glycyl lysine isopeptide (Lys-Gly) (interchain with G-Cter in SUMO2) cross-link involves residue lysine 73. 76–77 (QS) is a binding site for glutathione. Positions 94 to 212 (TEEEKIRVDI…QSDQFFKMPI (119 aa)) constitute a GST C-terminal domain. Tyrosine 120 contacts substrate.

This sequence belongs to the GST superfamily. Mu family. As to quaternary structure, homodimer.

Its subcellular location is the cytoplasm. The enzyme catalyses RX + glutathione = an S-substituted glutathione + a halide anion + H(+). In terms of biological role, conjugation of reduced glutathione to a wide number of exogenous and endogenous hydrophobic electrophiles. May govern uptake and detoxification of both endogenous compounds and xenobiotics at the testis and brain blood barriers. The polypeptide is Glutathione S-transferase Mu 3 (GSTM3) (Macaca fuscata fuscata (Japanese macaque)).